Here is a 180-residue protein sequence, read N- to C-terminus: ATP-dependent protease subunit HslV (180 aa).

T7 is an active-site residue. Residues A164, C167, and T170 each contribute to the Na(+) site.

The protein belongs to the peptidase T1B family. HslV subfamily. A double ring-shaped homohexamer of HslV is capped on each side by a ring-shaped HslU homohexamer. The assembly of the HslU/HslV complex is dependent on binding of ATP.

The protein resides in the cytoplasm. The catalysed reaction is ATP-dependent cleavage of peptide bonds with broad specificity.. Its activity is regulated as follows. Allosterically activated by HslU binding. In terms of biological role, protease subunit of a proteasome-like degradation complex believed to be a general protein degrading machinery. The polypeptide is ATP-dependent protease subunit HslV (Brevibacillus brevis (strain 47 / JCM 6285 / NBRC 100599)).